The chain runs to 145 residues: UPF0102 protein BAV3162 (145 aa).

Belongs to the UPF0102 family.

The sequence is that of UPF0102 protein BAV3162 from Bordetella avium (strain 197N).